The chain runs to 99 residues: Co-chaperonin GroES (99 aa).

The protein belongs to the GroES chaperonin family. As to quaternary structure, heptamer of 7 subunits arranged in a ring. Interacts with the chaperonin GroEL.

The protein resides in the cytoplasm. Functionally, together with the chaperonin GroEL, plays an essential role in assisting protein folding. The GroEL-GroES system forms a nano-cage that allows encapsulation of the non-native substrate proteins and provides a physical environment optimized to promote and accelerate protein folding. GroES binds to the apical surface of the GroEL ring, thereby capping the opening of the GroEL channel. The polypeptide is Co-chaperonin GroES (Corynebacterium jeikeium (strain K411)).